Here is a 1207-residue protein sequence, read N- to C-terminus: RNA-binding protein 20 (1207 aa).

The interval 1 to 58 is disordered; the sequence is MVLAAAMSQDADPSGPEQPDRDACIVPGVQGPPAPQGQQGMQPLPPPLPPPPQPQSSL. The segment covering 43-54 has biased composition (pro residues); that stretch reads PLPPPLPPPPQP. The U1-type zinc finger occupies 412-446; sequence HLPHICSICDKKVFDLKDWELHVKGKLHAQKCLLF. The 76-residue stretch at 521–596 folds into the RRM domain; sequence RVVHICNLPE…EKLLIRMSTR (76 aa). Residues 625–637 show a composition bias toward basic and acidic residues; it reads LREADRYGPERPR. Disordered regions lie at residues 625 to 686, 722 to 896, and 951 to 1110; these read LREA…NGED, EKYL…MEEL, and QGET…AELK. Residues 631–650 form an RS region; the sequence is YGPERPRSRSPMSRSLSPRS. Residues Ser-638, Ser-640, Ser-643, Ser-645, and Ser-652 each carry the phosphoserine modification. The segment covering 639-650 has biased composition (low complexity); that stretch reads RSPMSRSLSPRS. A compositionally biased stretch (basic and acidic residues) spans 668–686; it reads YAWRDEDRETVPRRENGED. Position 729 is a phosphoserine (Ser-729). Composition is skewed to basic and acidic residues over residues 740–759, 772–789, and 796–836; these read KGRE…DKHP, RKEE…PEDS, and EPKV…RGAE. The residue at position 789 (Ser-789) is a Phosphoserine. Positions 839-848 are enriched in acidic residues; it reads AGTEEQEGME. Phosphoserine is present on residues Ser-853 and Ser-864. Positions 853 to 863 are enriched in polar residues; sequence SVGTQQEGTES. Basic and acidic residues predominate over residues 867-876; that stretch reads ENTRTKKGQD. Phosphoserine occurs at positions 879, 881, and 963. Polar residues predominate over residues 970 to 979; the sequence is VPSTSTSCPN. Ser-999 is modified (phosphoserine). Over residues 1011–1022 the composition is skewed to basic and acidic residues; the sequence is YEKEARGAEGSD. 7 positions are modified to phosphoserine: Ser-1034, Ser-1046, Ser-1057, Ser-1066, Ser-1078, Ser-1096, and Ser-1101. A compositionally biased stretch (basic and acidic residues) spans 1050–1072; that stretch reads DDCKARGSPEDGPHEVSPLEEKA. Residues 1073–1102 show a composition bias toward polar residues; sequence SPTTESDLQSQACQENSRYTETRSLNSRSP. The segment at 1141-1172 adopts a Matrin-type zinc-finger fold; it reads FYCKLCGLFYTSEEAAKVSHCRSTVHYRNLQK. A disordered region spans residues 1181 to 1207; that stretch reads GLKETEGVDSPSPERSGIGPHLERKKL. 2 positions are modified to phosphoserine: Ser-1190 and Ser-1192.

Associates with components of the U1 and U2 U1 small nuclear ribonucleoprotein complexes. In terms of processing, phosphorylation regulates the subcellular localization. Phosphorylation of Ser-638 and Ser-640 in the RS (arginine/serine-rich) region promotes nuclear localization of the protein. In contrast, phosphorylation of the C-terminal disordered region promotes localization to cytoplasmic ribonucleoprotein granules.

It is found in the nucleus. The protein resides in the cytoplasm. The protein localises to the cytoplasmic ribonucleoprotein granule. Its function is as follows. RNA-binding protein that acts as a regulator of mRNA splicing of a subset of genes encoding key structural proteins involved in cardiac development, such as TTN (Titin), CACNA1C, CAMK2D or PDLIM5/ENH. Acts as a repressor of mRNA splicing: specifically binds the 5'UCUU-3' motif that is predominantly found within intronic sequences of pre-mRNAs, leading to the exclusion of specific exons in target transcripts. RBM20-mediated exon skipping is hormone-dependent and is essential for TTN isoform transition in both cardiac and skeletal muscles. RBM20-mediated exon skipping of TTN provides substrates for the formation of circular RNA (circRNAs) from the TTN transcripts. Together with RBM24, promotes the expression of short isoforms of PDLIM5/ENH in cardiomyocytes. This Rattus norvegicus (Rat) protein is RNA-binding protein 20.